The chain runs to 206 residues: Thymidylate kinase (206 aa).

Position 11–18 (11–18 (GIDGAGKT)) interacts with ATP.

This sequence belongs to the thymidylate kinase family.

It carries out the reaction dTMP + ATP = dTDP + ADP. In terms of biological role, phosphorylation of dTMP to form dTDP in both de novo and salvage pathways of dTTP synthesis. In Burkholderia lata (strain ATCC 17760 / DSM 23089 / LMG 22485 / NCIMB 9086 / R18194 / 383), this protein is Thymidylate kinase.